Reading from the N-terminus, the 179-residue chain is Mediator of RNA polymerase II transcription subunit 29 (179 aa).

It belongs to the Mediator complex subunit 29 family. Component of the Mediator complex.

It is found in the nucleus. Its function is as follows. Component of the Mediator complex, a coactivator involved in the regulated transcription of nearly all RNA polymerase II-dependent genes. Mediator functions as a bridge to convey information from gene-specific regulatory proteins to the basal RNA polymerase II transcription machinery. Mediator is recruited to promoters by direct interactions with regulatory proteins and serves as a scaffold for the assembly of a functional preinitiation complex with RNA polymerase II and the general transcription factors. The chain is Mediator of RNA polymerase II transcription subunit 29 (med29) from Danio rerio (Zebrafish).